The primary structure comprises 970 residues: Transcriptional activator protein DAL81 (970 aa).

Disordered stretches follow at residues 1-44, 64-95, and 118-140; these read MDPH…NHDI, NILR…QQQS, and DNVS…NNDI. Composition is skewed to low complexity over residues 15 to 41, 73 to 94, and 121 to 140; these read TKSV…NNSN, QQQQ…QQQQ, and SNSA…NNDI. The zn(2)-C6 fungal-type DNA-binding region spans 150 to 179; sequence CNQCRLKKTKCNYFPDLGNCLECETSRTKC. A compositionally biased stretch (low complexity) spans 807 to 823; it reads SFPNGTTSTTTPVNPTS. The segment at 807–970 is disordered; the sequence is SFPNGTTSTT…VTINTRETPL (164 aa). 2 stretches are compositionally biased toward polar residues: residues 824 to 836 and 858 to 870; these read RQTQ…SPAI and KTSQ…TPSH. Ser-833 carries the post-translational modification Phosphoserine. Residues 875–894 are compositionally biased toward low complexity; that stretch reads PPSNTSSPRVNSSTNVNSNT. Residues 895–906 show a composition bias toward polar residues; it reads QMNASPLTSINE. The segment covering 907-938 has biased composition (basic and acidic residues); it reads TRQESGDAADEKTAGRERTANEESSTELKDDN. Polar residues-rich tracts occupy residues 939–954 and 961–970; these read PNSN…QTIK and VTINTRETPL.

Its subcellular location is the nucleus. Functionally, positive regulation of genes required for catabolism of GABA (UGA4, UGA1, and UGA2), urea (DUR1 and DUR2), arginine and allantoin. The protein is Transcriptional activator protein DAL81 (DAL81) of Saccharomyces cerevisiae (strain ATCC 204508 / S288c) (Baker's yeast).